The primary structure comprises 605 residues: MATTTSHATNTWIKTKLSMPSSKEFGFASNSISLLKNQHNRQSLNINSSLQAPPILHFPKQSSNYQTPKNNTISHPKQENNNSSSSSTSKWNLVQKAAAMALDAVESALTKHELEHPLPKTADPRVQISGNFAPVPENPVCQSLPVTGKIPKCVQGVYVRNGANPLFEPTAGHHFFDGDGMVHAVQFKNGSASYACRFTETERLVQEKALGRPVFPKAIGELHGHSGIARLMLFYARGLFGLVDHSKGTGVANAGLVYFNNRLLAMSEDDLPYHVKVTPTGDLKTEGRFDFDGQLKSTMIAHPKLDPVSGELFALSYDVIQKPYLKYFRFSKNGEKSNDVEIPVEDPTMMHDFAITENFVVIPDQQVVFKMSEMIRGGSPVVYDKNKVSRFGILDKYAKDGSDLKWVEVPDCFCFHLWNAWEEAETDEIVVIGSCMTPPDSIFNECDEGLKSVLSEIRLNLKTGKSTRKSIIENPDEQVNLEAGMVNRNKLGRKTEYAYLAIAEPWPKVSGFAKVNLFTGEVEKFIYGDNKYGGEPLFLPRDPNSKEEDDGYILAFVHDEKEWKSELQIVNAMSLKLEATVKLPSRVPYGFHGTFINANDLANQA.

A chloroplast-targeting transit peptide spans 1–16; it reads MATTTSHATNTWIKTK. The disordered stretch occupies residues 55-89; it reads ILHFPKQSSNYQTPKNNTISHPKQENNNSSSSSTS. Over residues 60–75 the composition is skewed to polar residues; that stretch reads KQSSNYQTPKNNTISH. The segment covering 80–89 has biased composition (low complexity); that stretch reads NNNSSSSSTS. Fe cation-binding residues include His-302, His-351, His-416, and His-592.

The protein belongs to the carotenoid oxygenase family. Fe(2+) is required as a cofactor. In terms of tissue distribution, expressed in developing and ripening fruits. Highly expressed in pulp. Observed in unpollinated ovaries (e.g. ovules, placenta and pericarp). Expressed in flowers.

The protein resides in the plastid. Its subcellular location is the chloroplast stroma. It catalyses the reaction a 9-cis-epoxycarotenoid + O2 = a 12'-apo-carotenal + 2-cis,4-trans-xanthoxin. It carries out the reaction 9-cis-violaxanthin + O2 = (3S,5R,6S)-5,6-epoxy-3-hydroxy-5,6-dihydro-12'-apo-beta-caroten-12'-al + 2-cis,4-trans-xanthoxin. The enzyme catalyses 9'-cis-neoxanthin + O2 = (3S,5R,6R)-3,5-dihydroxy-6,7-didehydro-5,6-dihydro-12'-apo-beta-caroten-12'-al + 2-cis,4-trans-xanthoxin. The protein operates within plant hormone biosynthesis; abscisate biosynthesis. Functionally, has a 11,12(11',12') 9-cis epoxycarotenoid cleavage activity. Catalyzes the first step of abscisic-acid (ABA) biosynthesis from carotenoids. Required for ABA accumulation upon drought. Required for ABA-mediated regulation of anther/pollen development, including metabolism, cell wall modification and transcription level. Positive regulator of fruit ripening involved in the biosynthesis of abscisic acid (ABA); initiates ABA biosynthesis at the onset of fruit ripening. Modulates the degree of pigmentation and carotenoid composition as well as pectin catabolism during ripening and may regulate the ethylene production and action in climacteric tomato fruit. The protein is 9-cis-epoxycarotenoid dioxygenase NCED1, chloroplastic of Solanum lycopersicum (Tomato).